Reading from the N-terminus, the 540-residue chain is Chaperonin GroEL 3 (540 aa).

ATP-binding positions include 30-33, lysine 51, 87-91, glycine 415, 480-482, and aspartate 496; these read TLGP, DGTTT, and NAA.

Belongs to the chaperonin (HSP60) family. In terms of assembly, forms a cylinder of 14 subunits composed of two heptameric rings stacked back-to-back. Interacts with the co-chaperonin GroES.

The protein localises to the cytoplasm. The catalysed reaction is ATP + H2O + a folded polypeptide = ADP + phosphate + an unfolded polypeptide.. Its function is as follows. Together with its co-chaperonin GroES, plays an essential role in assisting protein folding. The GroEL-GroES system forms a nano-cage that allows encapsulation of the non-native substrate proteins and provides a physical environment optimized to promote and accelerate protein folding. The chain is Chaperonin GroEL 3 from Bradyrhizobium sp. (strain BTAi1 / ATCC BAA-1182).